Consider the following 157-residue polypeptide: SsrA-binding protein (157 aa).

This sequence belongs to the SmpB family.

It is found in the cytoplasm. Its function is as follows. Required for rescue of stalled ribosomes mediated by trans-translation. Binds to transfer-messenger RNA (tmRNA), required for stable association of tmRNA with ribosomes. tmRNA and SmpB together mimic tRNA shape, replacing the anticodon stem-loop with SmpB. tmRNA is encoded by the ssrA gene; the 2 termini fold to resemble tRNA(Ala) and it encodes a 'tag peptide', a short internal open reading frame. During trans-translation Ala-aminoacylated tmRNA acts like a tRNA, entering the A-site of stalled ribosomes, displacing the stalled mRNA. The ribosome then switches to translate the ORF on the tmRNA; the nascent peptide is terminated with the 'tag peptide' encoded by the tmRNA and targeted for degradation. The ribosome is freed to recommence translation, which seems to be the essential function of trans-translation. This chain is SsrA-binding protein, found in Lacticaseibacillus paracasei (strain ATCC 334 / BCRC 17002 / CCUG 31169 / CIP 107868 / KCTC 3260 / NRRL B-441) (Lactobacillus paracasei).